The primary structure comprises 273 residues: Imidazole glycerol phosphate synthase subunit HisF (273 aa).

Active-site residues include Asp-12 and Asp-136.

The protein belongs to the HisA/HisF family. Heterodimer of HisH and HisF.

It is found in the cytoplasm. The enzyme catalyses 5-[(5-phospho-1-deoxy-D-ribulos-1-ylimino)methylamino]-1-(5-phospho-beta-D-ribosyl)imidazole-4-carboxamide + L-glutamine = D-erythro-1-(imidazol-4-yl)glycerol 3-phosphate + 5-amino-1-(5-phospho-beta-D-ribosyl)imidazole-4-carboxamide + L-glutamate + H(+). Its pathway is amino-acid biosynthesis; L-histidine biosynthesis; L-histidine from 5-phospho-alpha-D-ribose 1-diphosphate: step 5/9. Its function is as follows. IGPS catalyzes the conversion of PRFAR and glutamine to IGP, AICAR and glutamate. The HisF subunit catalyzes the cyclization activity that produces IGP and AICAR from PRFAR using the ammonia provided by the HisH subunit. This chain is Imidazole glycerol phosphate synthase subunit HisF, found in Halobacterium salinarum (strain ATCC 29341 / DSM 671 / R1).